The primary structure comprises 338 residues: MLKEIRGKSAKNLRGRSFLKLLDFTTDEIRYLLDLSKNFKDMKRAGIPHRYLEGKNIVLLFEKTSTRTRCSFEVAGYDLGMGVTYLDPNSSQMGHKESIEDTARVLGRMYDGIEYRGFSQELVETLAEYSGVPVWNGLTDLFHPTQMLADLLTIEEKFGYLKGLKFTYMGDARNNVANSLMIACVKMGMHFTACSPKHLFPTEDLVAEAKKIAAQTGGSVTLTENVSEGTKGAHVLYTDIWVSMGEPDSVWEERIKLLKPYQVNKAAMDNADKDAIFLHCLPSFHDLKTTKGQEINKKFGLPEMEVTNEVFESHKSVVFDEAENRMHTIKAVMYATMC.

Residues 65–68 (STRT), Gln92, Arg116, and 143–146 (HPTQ) each bind carbamoyl phosphate. L-ornithine is bound by residues Asn175, Asp239, and 243 to 244 (SM). Residues 280 to 281 (CL) and Arg325 contribute to the carbamoyl phosphate site.

The protein belongs to the aspartate/ornithine carbamoyltransferase superfamily. OTCase family.

Its subcellular location is the cytoplasm. It catalyses the reaction carbamoyl phosphate + L-ornithine = L-citrulline + phosphate + H(+). Its pathway is amino-acid degradation; L-arginine degradation via ADI pathway; carbamoyl phosphate from L-arginine: step 2/2. Its function is as follows. Reversibly catalyzes the transfer of the carbamoyl group from carbamoyl phosphate (CP) to the N(epsilon) atom of ornithine (ORN) to produce L-citrulline. The polypeptide is Ornithine carbamoyltransferase, catabolic (Treponema denticola (strain ATCC 35405 / DSM 14222 / CIP 103919 / JCM 8153 / KCTC 15104)).